Here is a 676-residue protein sequence, read N- to C-terminus: PAS domain-containing protein cky-1 (676 aa).

Residues Ser-45–Asn-72 show a composition bias toward low complexity. The disordered stretch occupies residues Ser-45 to Arg-89. Polar residues predominate over residues Leu-73 to Ala-84. The segment at Gly-76–Arg-89 is basic motif. In terms of domain architecture, bHLH spans Gly-76–His-129. Residues Asp-90–His-129 form a helix-loop-helix motif region. The PAS domain maps to Met-165 to Leu-215. Residues Phe-436–Pro-462 are disordered.

In terms of assembly, heterodimer; efficient DNA binding requires dimerization with another bHLH protein. Forms a heterodimer with ARNT homolog aha-1; binds DNA as heterodimer.

It localises to the nucleus. Transcription factor. Efficient DNA binding requires dimerization with another bHLH protein, such as ARNT homolog aha-1. Regulates transcription of target genes, probably acting in complex with aha-1. The chain is PAS domain-containing protein cky-1 from Caenorhabditis elegans.